The following is a 1230-amino-acid chain: Serine/threonine-protein kinase PDK1 (1230 aa).

The interval 1 to 277 (MASSHFGPAS…ASSGALKKHS (277 aa)) is disordered. Positions 34 to 50 (SSSSSSRSTTTCSSTSS) are enriched in low complexity. The span at 62 to 76 (ETSTAATSRSQLPSN) shows a compositional bias: polar residues. A compositionally biased stretch (basic and acidic residues) spans 77-87 (RHSENEAEHDT). 2 stretches are compositionally biased toward polar residues: residues 107-117 (PRSNRLGTSPQ) and 140-175 (SKRQSNTETVSGTSPSTPLGKSFLAQQDLSPNSSTI). Residues 185–202 (PNDRLSHDRESHSAERPR) show a composition bias toward basic and acidic residues. The segment covering 217–226 (STPSSPTNSY) has biased composition (polar residues). The span at 252–262 (ARDGDDRERRQ) shows a compositional bias: basic and acidic residues. The 521-residue stretch at 281-801 (WVLGEELGVG…ITFIKTHPFF (521 aa)) folds into the Protein kinase domain. ATP is bound by residues 291–293 (SYS) and lysine 319. Disordered regions lie at residues 345 to 522 (LSDP…RSGA) and 534 to 597 (TLPP…KMSA). Composition is skewed to polar residues over residues 378-397 (TASIGGQSSMASVSGGTVSN) and 408-433 (IVTTSSAASSPVLTASSGSTQLSPTA). Composition is skewed to basic and acidic residues over residues 466 to 494 (GGEDGKDGQDGQETPSREWDRDRDWDNMT) and 502 to 521 (VREESAEGGEKEKDEEERSG). Residues 535 to 544 (LPPPQIPSTP) are compositionally biased toward pro residues. A compositionally biased stretch (basic and acidic residues) spans 555–569 (DGHRTSRETPRDRPH). ATP-binding positions include 621–623 (SLA) and glutamate 627. Aspartate 666 functions as the Proton acceptor in the catalytic mechanism. 2 residues coordinate ATP: glutamate 670 and aspartate 684. The segment covering 850–859 (EDEDGFEYDA) has biased composition (acidic residues). Disordered stretches follow at residues 850 to 871 (EDEDGFEYDADTVSPRPEGGAV), 907 to 955 (LGED…GGNR), 972 to 1035 (GGGM…SDEA), and 1116 to 1152 (EADGDPAGSDSGAGLSSSSHVESGGGGVGGGGRGGGH). Over residues 927 to 942 (GKREKEVEKKKGEKAR) the composition is skewed to basic and acidic residues. Low complexity-rich tracts occupy residues 977–992 (GSATSVAASDTVRTPG), 1002–1030 (RPGSRAGIPSFGLGPGSGSRSNRGSGASM), and 1120–1137 (DPAGSDSGAGLSSSSHVE). The span at 1138–1152 (SGGGGVGGGGRGGGH) shows a compositional bias: gly residues.

This sequence belongs to the protein kinase superfamily. AGC Ser/Thr protein kinase family. PDPK1 subfamily.

It catalyses the reaction L-seryl-[protein] + ATP = O-phospho-L-seryl-[protein] + ADP + H(+). The enzyme catalyses L-threonyl-[protein] + ATP = O-phospho-L-threonyl-[protein] + ADP + H(+). Serine/threonine-protein kinase that functions in the sphingolipid-mediated signaling pathway, regulating organization of the plasma membrane. May phosphorylate PKC1 to activate the cell integrity MAPK cascade during cell wall and membrane stress. May regulate sphingolipid metabolism upstream of YPK1. This is Serine/threonine-protein kinase PDK1 from Cryptococcus neoformans var. grubii serotype A (strain H99 / ATCC 208821 / CBS 10515 / FGSC 9487) (Filobasidiella neoformans var. grubii).